Reading from the N-terminus, the 390-residue chain is uncharacterized protein (390 aa).

Belongs to the peptidase M24 family.

This is an uncharacterized protein from Sinorhizobium fredii (strain NBRC 101917 / NGR234).